The chain runs to 127 residues: Apolipoprotein C-IV (127 aa).

Residues 1 to 27 (MSLLRNRLQDLPALCLCVLVLACIGAC) form the signal peptide.

It belongs to the apolipoprotein C4 family.

The protein localises to the secreted. Functionally, may participate in lipoprotein metabolism. The protein is Apolipoprotein C-IV (APOC4) of Papio hamadryas (Hamadryas baboon).